Here is a 207-residue protein sequence, read N- to C-terminus: MDTIITNAFFENKTTIELARDILGMRLVHQTTNGKLSGLIVETEAYLGATDMAAHSFQNLRTKRTEVMFSSPGRIYMYQMHRQVLLNFITMPEGIPEAILIRAIEPEEQAKHLMEQNRGGKTGYELTNGPGKLTQALGLSMQDYGKTLFDSNIWLEEAKTPHLIEATNRIGVPNKGIATHFPLRFTVKGSPYLSAQRKSRILADIWE.

Belongs to the DNA glycosylase MPG family.

The protein is Putative 3-methyladenine DNA glycosylase of Listeria monocytogenes serotype 4a (strain HCC23).